A 75-amino-acid polypeptide reads, in one-letter code: Dermaseptin-DA2 (75 aa).

An N-terminal signal peptide occupies residues 1-22 (MALVKKSLFLVLFLGLVSLSIC). Positions 23–42 (EEKRENEDEEEQEDDEQSEE) are excised as a propeptide.

This sequence belongs to the frog skin active peptide (FSAP) family. Dermaseptin subfamily. As to expression, expressed by the skin glands.

It is found in the secreted. Functionally, possesses a potent antimicrobial activity against Gram-positive and Gram-negative bacteria. Probably acts by disturbing membrane functions with its amphipathic structure. In Agalychnis dacnicolor (Giant Mexican leaf frog), this protein is Dermaseptin-DA2.